Consider the following 315-residue polypeptide: Transcription factor MafAa (315 aa).

Residues 52–104 are compositionally biased toward low complexity; the sequence is STPISTPCSSVPSSPSFCAPSPGSQPGQNLVNGVNNNNNNSGNGNNNTQGSSG. Disordered regions lie at residues 52-108 and 169-191; these read STPI…KPQM and ATNGHHHPVHHHHHHHGHHAHAR. A compositionally biased stretch (basic residues) spans 172–189; sequence GHHHPVHHHHHHHGHHAH. The basic motif stretch occupies residues 223 to 248; sequence RLKQKRRTLKNRGYAQSCRYKRVQQR. Residues 223–286 enclose the bZIP domain; it reads RLKQKRRTLK…DLYKEKYEKL (64 aa). The interval 229–243 is interaction with DNA; sequence RTLKNRGYAQSCRYK. Residues 251–272 are leucine-zipper; it reads LESEKCTLQSQVEQLKQDVARL. The interval 290 to 315 is disordered; it reads AFNGGGNTRDPSSGNHVKTTSTDFFM. Over residues 298–315 the composition is skewed to polar residues; that stretch reads RDPSSGNHVKTTSTDFFM.

The protein belongs to the bZIP family. Maf subfamily.

The protein localises to the nucleus. Transcription factor, possibly involved in transcription regulation during lens development, including that of crystallin genes. Specifically binds to the alphaCE2 enhancer element of crystallin gene. This is Transcription factor MafAa (mafaa) from Danio rerio (Zebrafish).